Here is a 104-residue protein sequence, read N- to C-terminus: Integration host factor subunit alpha (104 aa).

The protein belongs to the bacterial histone-like protein family. In terms of assembly, heterodimer of an alpha and a beta chain.

This protein is one of the two subunits of integration host factor, a specific DNA-binding protein that functions in genetic recombination as well as in transcriptional and translational control. This Bartonella quintana (strain Toulouse) (Rochalimaea quintana) protein is Integration host factor subunit alpha.